Here is an 874-residue protein sequence, read N- to C-terminus: Alanine--tRNA ligase (874 aa).

Zn(2+) is bound by residues H562, H566, C664, and H668.

This sequence belongs to the class-II aminoacyl-tRNA synthetase family. Zn(2+) is required as a cofactor.

The protein localises to the cytoplasm. It carries out the reaction tRNA(Ala) + L-alanine + ATP = L-alanyl-tRNA(Ala) + AMP + diphosphate. Its function is as follows. Catalyzes the attachment of alanine to tRNA(Ala) in a two-step reaction: alanine is first activated by ATP to form Ala-AMP and then transferred to the acceptor end of tRNA(Ala). Also edits incorrectly charged Ser-tRNA(Ala) and Gly-tRNA(Ala) via its editing domain. This is Alanine--tRNA ligase from Shewanella halifaxensis (strain HAW-EB4).